Consider the following 211-residue polypeptide: DNA-directed RNA polymerases I, II, and III subunit RPABC1 (211 aa).

Belongs to the archaeal Rpo5/eukaryotic RPB5 RNA polymerase subunit family. Component of the RNA polymerase I (Pol I), RNA polymerase II (Pol II) and RNA polymerase III (Pol III) complexes consisting of at least 13, 12 and 17 subunits, respectively. In RNA Pol II, this subunit is present in 2-fold molar excess over the other subunits.

Its subcellular location is the nucleus. In terms of biological role, DNA-dependent RNA polymerase catalyzes the transcription of DNA into RNA using the four ribonucleoside triphosphates as substrates. Common component of RNA polymerases I, II and III which synthesize ribosomal RNA precursors, mRNA precursors and many functional non-coding RNAs, and small RNAs, such as 5S rRNA and tRNAs, respectively. Pol II is the central component of the basal RNA polymerase II transcription machinery. Pols are composed of mobile elements that move relative to each other. In Pol II, RPB5 is part of the lower jaw surrounding the central large cleft and thought to grab the incoming DNA template. Seems to be the major component in this process. The sequence is that of DNA-directed RNA polymerases I, II, and III subunit RPABC1 (rpb-5) from Caenorhabditis elegans.